The sequence spans 373 residues: Alanine racemase (373 aa).

Lysine 40 (proton acceptor; specific for D-alanine) is an active-site residue. Lysine 40 is subject to N6-(pyridoxal phosphate)lysine. Arginine 140 is a binding site for substrate. Catalysis depends on tyrosine 268, which acts as the Proton acceptor; specific for L-alanine. Residue methionine 315 participates in substrate binding.

This sequence belongs to the alanine racemase family. Pyridoxal 5'-phosphate serves as cofactor.

It catalyses the reaction L-alanine = D-alanine. Its pathway is amino-acid biosynthesis; D-alanine biosynthesis; D-alanine from L-alanine: step 1/1. Catalyzes the interconversion of L-alanine and D-alanine. May also act on other amino acids. The chain is Alanine racemase (alr) from Levilactobacillus brevis (strain ATCC 367 / BCRC 12310 / CIP 105137 / JCM 1170 / LMG 11437 / NCIMB 947 / NCTC 947) (Lactobacillus brevis).